Here is a 320-residue protein sequence, read N- to C-terminus: MEMDFPVINMNNLNGESRVSVLNQINDACENWGFFELVNHGISHELMDKVEKLTKEHYRKCMEQRFKEMVASKGLDSVETEINDTDWESTFFLRHLPVSNMSEIGDLDEEYKKVMKEFADELEKLAEEVLDLLCENLGLEKGYLKKVFYGSKGPNFGTKVSNYPPCPKPELIKGLRAHTDAGGLILLFQDDKVSGLHVLKDGKWVDVPPMHHSIVINLGDQLEVITNGKYKSVMHRVIAQEDGNRMSIASFYNPGNDAVIYPAPALVEGEQEKTKLYPKFVFDDYMKLYVGLKFQAKEPRFEAMKAMESTNLNMGPIATV.

The Fe2OG dioxygenase domain maps to 154-254 (PNFGTKVSNY…RMSIASFYNP (101 aa)). Fe cation contacts are provided by His-178, Asp-180, and His-235.

The protein belongs to the iron/ascorbate-dependent oxidoreductase family. Requires Fe cation as cofactor. As to expression, flowers.

It carries out the reaction 1-aminocyclopropane-1-carboxylate + L-ascorbate + O2 = ethene + L-dehydroascorbate + hydrogen cyanide + CO2 + 2 H2O. The protein operates within alkene biosynthesis; ethylene biosynthesis via S-adenosyl-L-methionine; ethylene from S-adenosyl-L-methionine: step 2/2. The protein is 1-aminocyclopropane-1-carboxylate oxidase 3 (ACO3) of Cucumis melo (Muskmelon).